The following is a 425-amino-acid chain: UDP-N-acetylglucosamine 1-carboxyvinyltransferase (425 aa).

Residue 22-23 coordinates phosphoenolpyruvate; it reads KN. Arg98 contacts UDP-N-acetyl-alpha-D-glucosamine. Cys122 (proton donor) is an active-site residue. Cys122 is subject to 2-(S-cysteinyl)pyruvic acid O-phosphothioketal. UDP-N-acetyl-alpha-D-glucosamine contacts are provided by residues 127–131, Asp313, and Ile335; that span reads RPVDQ.

It belongs to the EPSP synthase family. MurA subfamily.

The protein localises to the cytoplasm. It carries out the reaction phosphoenolpyruvate + UDP-N-acetyl-alpha-D-glucosamine = UDP-N-acetyl-3-O-(1-carboxyvinyl)-alpha-D-glucosamine + phosphate. It functions in the pathway cell wall biogenesis; peptidoglycan biosynthesis. Functionally, cell wall formation. Adds enolpyruvyl to UDP-N-acetylglucosamine. The protein is UDP-N-acetylglucosamine 1-carboxyvinyltransferase of Xylella fastidiosa (strain 9a5c).